A 290-amino-acid polypeptide reads, in one-letter code: Probable branched-chain-amino-acid aminotransferase (290 aa).

At Lys-155 the chain carries N6-(pyridoxal phosphate)lysine.

Belongs to the class-IV pyridoxal-phosphate-dependent aminotransferase family. Pyridoxal 5'-phosphate is required as a cofactor.

It carries out the reaction L-leucine + 2-oxoglutarate = 4-methyl-2-oxopentanoate + L-glutamate. The catalysed reaction is L-isoleucine + 2-oxoglutarate = (S)-3-methyl-2-oxopentanoate + L-glutamate. The enzyme catalyses L-valine + 2-oxoglutarate = 3-methyl-2-oxobutanoate + L-glutamate. The protein operates within amino-acid biosynthesis; L-isoleucine biosynthesis; L-isoleucine from 2-oxobutanoate: step 4/4. Its pathway is amino-acid biosynthesis; L-leucine biosynthesis; L-leucine from 3-methyl-2-oxobutanoate: step 4/4. It participates in amino-acid biosynthesis; L-valine biosynthesis; L-valine from pyruvate: step 4/4. Functionally, acts on leucine, isoleucine and valine. This is Probable branched-chain-amino-acid aminotransferase (ilvE) from Rickettsia felis (strain ATCC VR-1525 / URRWXCal2) (Rickettsia azadi).